Here is a 212-residue protein sequence, read N- to C-terminus: Ribonuclease HII (212 aa).

The 190-residue stretch at 20–209 (TCIVGVDEVG…VHNILYQEAS (190 aa)) folds into the RNase H type-2 domain. A divalent metal cation is bound by residues aspartate 26, glutamate 27, and aspartate 117.

It belongs to the RNase HII family. Requires Mn(2+) as cofactor. Mg(2+) serves as cofactor.

It localises to the cytoplasm. The catalysed reaction is Endonucleolytic cleavage to 5'-phosphomonoester.. Functionally, endonuclease that specifically degrades the RNA of RNA-DNA hybrids. The chain is Ribonuclease HII from Cereibacter sphaeroides (strain ATCC 17025 / ATH 2.4.3) (Rhodobacter sphaeroides).